Here is a 129-residue protein sequence, read N- to C-terminus: Phosphoribosyl-AMP cyclohydrolase (129 aa).

A Mg(2+)-binding site is contributed by Asp-94. Cys-95 contributes to the Zn(2+) binding site. Mg(2+) contacts are provided by Asp-96 and Asp-98. Positions 111 and 118 each coordinate Zn(2+).

Belongs to the PRA-CH family. In terms of assembly, homodimer. Mg(2+) is required as a cofactor. It depends on Zn(2+) as a cofactor.

Its subcellular location is the cytoplasm. The enzyme catalyses 1-(5-phospho-beta-D-ribosyl)-5'-AMP + H2O = 1-(5-phospho-beta-D-ribosyl)-5-[(5-phospho-beta-D-ribosylamino)methylideneamino]imidazole-4-carboxamide. The protein operates within amino-acid biosynthesis; L-histidine biosynthesis; L-histidine from 5-phospho-alpha-D-ribose 1-diphosphate: step 3/9. Its function is as follows. Catalyzes the hydrolysis of the adenine ring of phosphoribosyl-AMP. The protein is Phosphoribosyl-AMP cyclohydrolase of Corynebacterium efficiens (strain DSM 44549 / YS-314 / AJ 12310 / JCM 11189 / NBRC 100395).